The primary structure comprises 171 residues: Thioredoxin-2 (171 aa).

In terms of domain architecture, Thioredoxin spans 41–169 (AFNASPSTSQ…LQALISANHP (129 aa)). The cysteines at positions 95 and 98 are disulfide-linked.

It belongs to the thioredoxin family.

The protein localises to the cytoplasm. The protein resides in the vacuole. Functionally, thioredoxin involved in responses to oxidative and cell wall stresses. Plays an important role in appressorium formation on hyphal tips. TRX2 may affect invasive growth via the MST11-MST7-PMK1 pathway since it is required for the proper folding or dimerization of MAPKK MST7. The polypeptide is Thioredoxin-2 (Pyricularia oryzae (strain 70-15 / ATCC MYA-4617 / FGSC 8958) (Rice blast fungus)).